A 205-amino-acid chain; its full sequence is Leucyl/phenylalanyl-tRNA--protein transferase (205 aa).

This sequence belongs to the L/F-transferase family.

Its subcellular location is the cytoplasm. The enzyme catalyses N-terminal L-lysyl-[protein] + L-leucyl-tRNA(Leu) = N-terminal L-leucyl-L-lysyl-[protein] + tRNA(Leu) + H(+). The catalysed reaction is N-terminal L-arginyl-[protein] + L-leucyl-tRNA(Leu) = N-terminal L-leucyl-L-arginyl-[protein] + tRNA(Leu) + H(+). It catalyses the reaction L-phenylalanyl-tRNA(Phe) + an N-terminal L-alpha-aminoacyl-[protein] = an N-terminal L-phenylalanyl-L-alpha-aminoacyl-[protein] + tRNA(Phe). Its function is as follows. Functions in the N-end rule pathway of protein degradation where it conjugates Leu, Phe and, less efficiently, Met from aminoacyl-tRNAs to the N-termini of proteins containing an N-terminal arginine or lysine. The protein is Leucyl/phenylalanyl-tRNA--protein transferase of Mesorhizobium japonicum (strain LMG 29417 / CECT 9101 / MAFF 303099) (Mesorhizobium loti (strain MAFF 303099)).